The following is a 469-amino-acid chain: Probable glucuronoxylan glucuronosyltransferase F8H (469 aa).

Topologically, residues 1-36 (MSLDIKKPNITKTKKKKTGFVVKMQLNNNRGGNKRN) are cytoplasmic. The helical; Signal-anchor for type II membrane protein transmembrane segment at 37-57 (IFIFFFFRNYYTWILWFCLSL) threads the bilayer. The Lumenal segment spans residues 58–469 (YFFTSYFSVE…RVLSQREVDM (412 aa)). N-linked (GlcNAc...) asparagine glycans are attached at residues Asn171, Asn203, Asn301, and Asn411.

The protein belongs to the glycosyltransferase 47 family. In terms of tissue distribution, expressed in xylem cells in stems and in roots.

Its subcellular location is the golgi apparatus membrane. Its function is as follows. Involved in the synthesis of the hemicellulose glucuronoxylan, a major component of secondary cell walls. Probably involved in the synthesis of the glycosyl sequence at the glucuronoxylan reducing end. The polypeptide is Probable glucuronoxylan glucuronosyltransferase F8H (F8H) (Arabidopsis thaliana (Mouse-ear cress)).